We begin with the raw amino-acid sequence, 178 residues long: ATP synthase subunit delta (178 aa).

This sequence belongs to the ATPase delta chain family. As to quaternary structure, F-type ATPases have 2 components, F(1) - the catalytic core - and F(0) - the membrane proton channel. F(1) has five subunits: alpha(3), beta(3), gamma(1), delta(1), epsilon(1). F(0) has three main subunits: a(1), b(2) and c(10-14). The alpha and beta chains form an alternating ring which encloses part of the gamma chain. F(1) is attached to F(0) by a central stalk formed by the gamma and epsilon chains, while a peripheral stalk is formed by the delta and b chains.

It is found in the cell inner membrane. Its function is as follows. F(1)F(0) ATP synthase produces ATP from ADP in the presence of a proton or sodium gradient. F-type ATPases consist of two structural domains, F(1) containing the extramembraneous catalytic core and F(0) containing the membrane proton channel, linked together by a central stalk and a peripheral stalk. During catalysis, ATP synthesis in the catalytic domain of F(1) is coupled via a rotary mechanism of the central stalk subunits to proton translocation. This protein is part of the stalk that links CF(0) to CF(1). It either transmits conformational changes from CF(0) to CF(1) or is implicated in proton conduction. This is ATP synthase subunit delta from Pseudomonas syringae pv. tomato (strain ATCC BAA-871 / DC3000).